We begin with the raw amino-acid sequence, 359 residues long: Fructose-bisphosphate aldolase class 2 (359 aa).

At Lys-9 the chain carries N6-acetyllysine. Ser-62 is a binding site for D-glyceraldehyde 3-phosphate. The active-site Proton donor is Asp-110. The Zn(2+) site is built by His-111, Asp-145, Glu-175, and His-227. Residue Gly-228 coordinates dihydroxyacetone phosphate. Residue His-265 coordinates Zn(2+). Residues Gly-266–Ser-268 and Asn-287–Thr-290 each bind dihydroxyacetone phosphate.

The protein belongs to the class II fructose-bisphosphate aldolase family. In terms of assembly, homodimer. Requires Zn(2+) as cofactor.

The catalysed reaction is beta-D-fructose 1,6-bisphosphate = D-glyceraldehyde 3-phosphate + dihydroxyacetone phosphate. It participates in carbohydrate degradation; glycolysis; D-glyceraldehyde 3-phosphate and glycerone phosphate from D-glucose: step 4/4. In terms of biological role, catalyzes the aldol condensation of dihydroxyacetone phosphate (DHAP or glycerone-phosphate) with glyceraldehyde 3-phosphate (G3P) to form fructose 1,6-bisphosphate (FBP) in gluconeogenesis and the reverse reaction in glycolysis. The sequence is that of Fructose-bisphosphate aldolase class 2 (fbaA) from Escherichia coli O157:H7.